Here is a 156-residue protein sequence, read N- to C-terminus: Ribonuclease H (156 aa).

The 142-residue stretch at 1–142 folds into the RNase H type-1 domain; it reads MGKQVEIFTD…CDELARAAAN (142 aa). Positions 10, 48, 70, and 134 each coordinate Mg(2+).

It belongs to the RNase H family. Monomer. Mg(2+) serves as cofactor.

The protein localises to the cytoplasm. It catalyses the reaction Endonucleolytic cleavage to 5'-phosphomonoester.. Endonuclease that specifically degrades the RNA of RNA-DNA hybrids. The sequence is that of Ribonuclease H from Photorhabdus luminescens (Xenorhabdus luminescens).